The chain runs to 156 residues: Crossover junction endodeoxyribonuclease RuvC (156 aa).

Catalysis depends on residues Asp7, Glu66, and Asp138. 3 residues coordinate Mg(2+): Asp7, Glu66, and Asp138.

The protein belongs to the RuvC family. As to quaternary structure, homodimer which binds Holliday junction (HJ) DNA. The HJ becomes 2-fold symmetrical on binding to RuvC with unstacked arms; it has a different conformation from HJ DNA in complex with RuvA. In the full resolvosome a probable DNA-RuvA(4)-RuvB(12)-RuvC(2) complex forms which resolves the HJ. The cofactor is Mg(2+).

Its subcellular location is the cytoplasm. It catalyses the reaction Endonucleolytic cleavage at a junction such as a reciprocal single-stranded crossover between two homologous DNA duplexes (Holliday junction).. In terms of biological role, the RuvA-RuvB-RuvC complex processes Holliday junction (HJ) DNA during genetic recombination and DNA repair. Endonuclease that resolves HJ intermediates. Cleaves cruciform DNA by making single-stranded nicks across the HJ at symmetrical positions within the homologous arms, yielding a 5'-phosphate and a 3'-hydroxyl group; requires a central core of homology in the junction. The consensus cleavage sequence is 5'-(A/T)TT(C/G)-3'. Cleavage occurs on the 3'-side of the TT dinucleotide at the point of strand exchange. HJ branch migration catalyzed by RuvA-RuvB allows RuvC to scan DNA until it finds its consensus sequence, where it cleaves and resolves the cruciform DNA. The protein is Crossover junction endodeoxyribonuclease RuvC of Ehrlichia canis (strain Jake).